The following is a 184-amino-acid chain: ATP synthase subunit b, chloroplastic (184 aa).

The helical transmembrane segment at 27-49 (LATNLINLSVVLGVLIFFGKGVL) threads the bilayer.

This sequence belongs to the ATPase B chain family. F-type ATPases have 2 components, F(1) - the catalytic core - and F(0) - the membrane proton channel. F(1) has five subunits: alpha(3), beta(3), gamma(1), delta(1), epsilon(1). F(0) has four main subunits: a(1), b(1), b'(1) and c(10-14). The alpha and beta chains form an alternating ring which encloses part of the gamma chain. F(1) is attached to F(0) by a central stalk formed by the gamma and epsilon chains, while a peripheral stalk is formed by the delta, b and b' chains.

Its subcellular location is the plastid. It localises to the chloroplast thylakoid membrane. In terms of biological role, f(1)F(0) ATP synthase produces ATP from ADP in the presence of a proton or sodium gradient. F-type ATPases consist of two structural domains, F(1) containing the extramembraneous catalytic core and F(0) containing the membrane proton channel, linked together by a central stalk and a peripheral stalk. During catalysis, ATP synthesis in the catalytic domain of F(1) is coupled via a rotary mechanism of the central stalk subunits to proton translocation. Functionally, component of the F(0) channel, it forms part of the peripheral stalk, linking F(1) to F(0). This is ATP synthase subunit b, chloroplastic from Guizotia abyssinica (Niger).